The primary structure comprises 216 residues: uncharacterized protein (216 aa).

A run of 6 helical transmembrane segments spans residues 12-32 (YVLG…FVLA), 48-68 (GVFL…ASLL), 74-94 (LFIG…VGML), 134-154 (ILFF…YPGL), 156-176 (FLVL…FLIF), and 191-211 (LAAG…VKLA).

The protein belongs to the Rht family.

It localises to the cell membrane. This is an uncharacterized protein from Pseudomonas aeruginosa (strain ATCC 15692 / DSM 22644 / CIP 104116 / JCM 14847 / LMG 12228 / 1C / PRS 101 / PAO1).